A 461-amino-acid polypeptide reads, in one-letter code: MVSVSKLINNGLLLTSQSVFQDVATPQQASVQQYNILNFLGGSAPYIQRNGYGISTDIPAGCEIAQIQLYSRHGERYPSKSNGKSLEAIYAKFKNYNGTFKGDLSFLNDYTYFVKDQSNYAKETSPKNSEGTYAGTTNALRHGAAFRAKYGSLYKENSTLPIFTSNSNRVHETSKYFARGFLGDDYEEGKTVKFNIISEDADVGANSLTPRSACSKNKESSSSTAKKYNTTYLNAIAERLVKPNPGLNLTTSDVNNLFSWCAYEINVRGSSPFCDLFTNEEFIKNSYGNDLSKYYSNGAGNNYTRIIGSVILNSSLELLKDTENSNQVWLSFAHDTDLEIFHSALGLLEPAEDLPTSYIPFPNPYVHSSIVPQGARIYTEKLQCGNDAYVRYIINDAVVPIPKCATGPGFSCKLDDFENFVKERIGDVDFIKQCGVNSTYPSELTFYWDYKNVTYNAPLEL.

3 disulfide bridges follow: Cys62-Cys384, Cys261-Cys274, and Cys404-Cys412. 1D-myo-inositol hexakisphosphate-binding residues include Arg72, His73, Arg76, and Ser79. His73 serves as the catalytic Nucleophile. Residues Asn97 and Asn157 are each glycosylated (N-linked (GlcNAc...) asparagine). Residue Arg169 participates in 1D-myo-inositol hexakisphosphate binding. N-linked (GlcNAc...) asparagine glycosylation is found at Asn229 and Asn248. A 1D-myo-inositol hexakisphosphate-binding site is contributed by Lys293. Residues Asn302 and Asn313 are each glycosylated (N-linked (GlcNAc...) asparagine). Positions 334 and 335 each coordinate 1D-myo-inositol hexakisphosphate. Asn437 and Asn452 each carry an N-linked (GlcNAc...) asparagine glycan.

Belongs to the histidine acid phosphatase family. In terms of assembly, monomer.

The protein resides in the secreted. The enzyme catalyses 1D-myo-inositol hexakisphosphate + H2O = 1D-myo-inositol 1,2,4,5,6-pentakisphosphate + phosphate. The catalysed reaction is 1D-myo-inositol 1,2,4,5,6-pentakisphosphate + H2O = 1D-myo-inositol 1,2,5,6-tetrakisphosphate + phosphate. It carries out the reaction 1D-myo-inositol 1,2,5,6-tetrakisphosphate + H2O = 1D-myo-inositol 1,2,6-trisphosphate + phosphate. It catalyses the reaction 1D-myo-inositol 1,2,6-trisphosphate + H2O = 1D-myo-inositol 1,2-bisphosphate + phosphate. The enzyme catalyses 1D-myo-inositol 1,2-bisphosphate + H2O = 1D-myo-inositol 2-phosphate + phosphate. Its function is as follows. Catalyzes the phosphate monoester hydrolysis of phytic acid (myo-inositol hexakisphosphate), which results in the stepwise formation of myo-inositol pentakis-, tetrakis-, tris-, bis-, and monophosphates, as well as the liberation of inorganic phosphate. Myo-inositol 2-monophosphate is the end product. Responsible of about 25% of the phytase activity. The residual phytase activity might be contributed by other cytosolic or cellular enzymes such as acid phosphatase that also degraded the substrate phytate. Is essential for human tissue damage during infection. This chain is Phytase PHO112 (PHO112), found in Candida albicans (strain SC5314 / ATCC MYA-2876) (Yeast).